The following is a 150-amino-acid chain: Protein Smg homolog (150 aa).

It belongs to the Smg family.

The protein is Protein Smg homolog of Methylibium petroleiphilum (strain ATCC BAA-1232 / LMG 22953 / PM1).